We begin with the raw amino-acid sequence, 76 residues long: MAMKKFVKKRKKVNFFAKNKINYIDYKDVELLKKFISGNGQILPRRITGTSPKHQRQLAVAIKRARQMALLPYVID.

It belongs to the bacterial ribosomal protein bS18 family. As to quaternary structure, part of the 30S ribosomal subunit. Forms a tight heterodimer with protein bS6.

Its function is as follows. Binds as a heterodimer with protein bS6 to the central domain of the 16S rRNA, where it helps stabilize the platform of the 30S subunit. In Mesoplasma florum (strain ATCC 33453 / NBRC 100688 / NCTC 11704 / L1) (Acholeplasma florum), this protein is Small ribosomal subunit protein bS18.